Here is a 328-residue protein sequence, read N- to C-terminus: Probable tRNA pseudouridine synthase B (328 aa).

The active-site Nucleophile is the Asp71. Positions 238–313 (LPKIWVRDSA…LVARVDRVIM (76 aa)) constitute a PUA domain.

It belongs to the pseudouridine synthase TruB family. Type 2 subfamily.

The catalysed reaction is uridine(55) in tRNA = pseudouridine(55) in tRNA. In terms of biological role, could be responsible for synthesis of pseudouridine from uracil-55 in the psi GC loop of transfer RNAs. The chain is Probable tRNA pseudouridine synthase B from Pyrobaculum islandicum (strain DSM 4184 / JCM 9189 / GEO3).